We begin with the raw amino-acid sequence, 160 residues long: MTAPASTQAATLKRFISAWEKWDAQEWISTFSDDFQQVTLPHSLSVPVRTRKEVEIVLPALVATVKSYQLQIHHVIHDPDNNKAVVYAASTGKLPWGDWNLEYAAFLTFTDDGGKVARLEEMLDTAFLQDFGPKFGKYLEENGGPVAVAAGGKQDLRSEA.

This sequence belongs to the avfA family.

It participates in secondary metabolite biosynthesis. Its function is as follows. Monooxygenase; part of the gene cluster that mediates the biosynthesis of the tetrahydroxanthone dimer secalonic acid D. The pathway begins with the synthesis of atrochrysone thioester by the polyketide synthase AacuL. The atrochrysone carboxyl ACP thioesterase AacuM then breaks the thioester bond and releases the atrochrysone carboxylic acid from AacuL. Atrochrysone carboxylic acid is decarboxylated by the decarboxylase AacuI, and oxidized by the anthrone oxygenase AacuG to yield emodin. Emodin is then reduced to emodin hydroquinone by a yet unidentified oxidoreductase. A-ring reduction by the short chain dehydrogenase AacuN, dehydration by the scytalone dehydratase-like protein AacuK and probable spontaneous re-oxidation, results in overall deoxygenation to chrysophanol. Baeyer-Villiger oxidation by the Baeyer-Villiger monooxygenase (BVMO) AacuH then yields monodictyphenone. Monodictyphenone is transformed into compounds with the tetrahydroxanthone skeleton via methylesterification by the methyltransferase AacuQ, followed by the action of the flavin-dependent monooxygenase AacuC, the isomerase AacuP, and the short chain dehydrogenase/reductase AacuF or AacuD. AacuF and AacuD should accept the same compound as a substrate but perform the ketoreduction with a different stereoselectivity, thus yielding blennolides B and A, respectively. In the final step of the biosynthesis, the cytochrome P450 monooxygenase AacuE accepts blennolide B and/or blennolide A to conduct the dimerization reaction to furnish the tetrahydroxanthone dimers, secalonic acids D, B, and F. This chain is Monooxygenase AacuO, found in Aspergillus aculeatus (strain ATCC 16872 / CBS 172.66 / WB 5094).